Reading from the N-terminus, the 164-residue chain is 3-isopropylmalate dehydratase small subunit 2 (164 aa).

Belongs to the LeuD family. LeuD type 2 subfamily. Heterodimer of LeuC and LeuD.

The catalysed reaction is (2R,3S)-3-isopropylmalate = (2S)-2-isopropylmalate. It participates in amino-acid biosynthesis; L-leucine biosynthesis; L-leucine from 3-methyl-2-oxobutanoate: step 2/4. Functionally, catalyzes the isomerization between 2-isopropylmalate and 3-isopropylmalate, via the formation of 2-isopropylmaleate. The chain is 3-isopropylmalate dehydratase small subunit 2 (leuD2) from Pyrococcus furiosus (strain ATCC 43587 / DSM 3638 / JCM 8422 / Vc1).